The primary structure comprises 429 residues: UDP-N-acetylglucosamine 1-carboxyvinyltransferase (429 aa).

22-23 provides a ligand contact to phosphoenolpyruvate; sequence KN. Arg-93 contacts UDP-N-acetyl-alpha-D-glucosamine. Cys-117 serves as the catalytic Proton donor. Residue Cys-117 is modified to 2-(S-cysteinyl)pyruvic acid O-phosphothioketal. Residues 122 to 126, Asp-307, and Val-329 contribute to the UDP-N-acetyl-alpha-D-glucosamine site; that span reads RPVDL.

This sequence belongs to the EPSP synthase family. MurA subfamily.

It localises to the cytoplasm. It catalyses the reaction phosphoenolpyruvate + UDP-N-acetyl-alpha-D-glucosamine = UDP-N-acetyl-3-O-(1-carboxyvinyl)-alpha-D-glucosamine + phosphate. It functions in the pathway cell wall biogenesis; peptidoglycan biosynthesis. Functionally, cell wall formation. Adds enolpyruvyl to UDP-N-acetylglucosamine. The polypeptide is UDP-N-acetylglucosamine 1-carboxyvinyltransferase (Chloroherpeton thalassium (strain ATCC 35110 / GB-78)).